Consider the following 413-residue polypeptide: Arginine deiminase (413 aa).

Cys403 (amidino-cysteine intermediate) is an active-site residue.

Belongs to the arginine deiminase family.

It localises to the cytoplasm. The enzyme catalyses L-arginine + H2O = L-citrulline + NH4(+). It functions in the pathway amino-acid degradation; L-arginine degradation via ADI pathway; carbamoyl phosphate from L-arginine: step 1/2. This Clostridium perfringens (strain SM101 / Type A) protein is Arginine deiminase.